The sequence spans 432 residues: Enolase (432 aa).

Q163 is a (2R)-2-phosphoglycerate binding site. Residue E205 is the Proton donor of the active site. The Mg(2+) site is built by D242, E289, and D316. Positions 341, 370, 371, and 392 each coordinate (2R)-2-phosphoglycerate. The Proton acceptor role is filled by K341.

Belongs to the enolase family. Requires Mg(2+) as cofactor. Probably phosphorylated.

The protein resides in the cytoplasm. It localises to the secreted. The protein localises to the cell surface. The catalysed reaction is (2R)-2-phosphoglycerate = phosphoenolpyruvate + H2O. The protein operates within carbohydrate degradation; glycolysis; pyruvate from D-glyceraldehyde 3-phosphate: step 4/5. Its function is as follows. Catalyzes the reversible conversion of 2-phosphoglycerate (2-PG) into phosphoenolpyruvate (PEP). It is essential for the degradation of carbohydrates via glycolysis. 'Moonlights' as a plasminogen receptor. Binds plasminogen and human salivary mucin MG2 when expressed on the bacterial cell surface, potentially allowing the bacterium to acquire surface-associated proteolytic activity that may help the dissemination through oral tissues and entrance into the blood stream. The chain is Enolase from Streptococcus mutans serotype c (strain ATCC 700610 / UA159).